Here is a 208-residue protein sequence, read N- to C-terminus: Uracil phosphoribosyltransferase (208 aa).

Residues Arg-78, Arg-103, and 130–138 each bind 5-phospho-alpha-D-ribose 1-diphosphate; that span reads DPMLATGGS. Uracil is bound by residues Ile-193 and 198 to 200; that span reads GDA. Asp-199 serves as a coordination point for 5-phospho-alpha-D-ribose 1-diphosphate.

This sequence belongs to the UPRTase family. Requires Mg(2+) as cofactor.

It catalyses the reaction UMP + diphosphate = 5-phospho-alpha-D-ribose 1-diphosphate + uracil. The protein operates within pyrimidine metabolism; UMP biosynthesis via salvage pathway; UMP from uracil: step 1/1. Its activity is regulated as follows. Allosterically activated by GTP. Functionally, catalyzes the conversion of uracil and 5-phospho-alpha-D-ribose 1-diphosphate (PRPP) to UMP and diphosphate. This Shewanella amazonensis (strain ATCC BAA-1098 / SB2B) protein is Uracil phosphoribosyltransferase.